We begin with the raw amino-acid sequence, 79 residues long: Apolipoprotein C-II (79 aa).

The N-terminal stretch at Met-1–Gly-21 is a signal peptide. The interval Gly-45 to Ile-52 is lipid binding. The interval Ser-56–Gln-79 is lipoprotein lipase cofactor.

This sequence belongs to the apolipoprotein C2 family. Post-translationally, proapolipoprotein C-II is synthesized as a sialic acid containing glycoprotein which is subsequently desialylated prior to its proteolytic processing. Proapolipoprotein C-II, the major form found in plasma undergoes proteolytic cleavage of its N-terminal hexapeptide to generate apolipoprotein C-II, which occurs as the minor form in plasma.

It localises to the secreted. Its function is as follows. Component of chylomicrons, very low-density lipoproteins (VLDL), low-density lipoproteins (LDL), and high-density lipoproteins (HDL) in plasma. Plays an important role in lipoprotein metabolism as an activator of lipoprotein lipase. Both proapolipoprotein C-II and apolipoprotein C-II can activate lipoprotein lipase. This Alligator mississippiensis (American alligator) protein is Apolipoprotein C-II (APOC2).